The following is a 438-amino-acid chain: 3-phosphoshikimate 1-carboxyvinyltransferase (438 aa).

3-phosphoshikimate is bound by residues Lys25, Ser26, and Arg30. Lys25 is a binding site for phosphoenolpyruvate. Positions 99 and 128 each coordinate phosphoenolpyruvate. 3-phosphoshikimate contacts are provided by Ser173, Gln175, Asp325, and Lys352. Gln175 provides a ligand contact to phosphoenolpyruvate. The active-site Proton acceptor is Asp325. Arg356 and Arg398 together coordinate phosphoenolpyruvate.

Belongs to the EPSP synthase family. In terms of assembly, monomer.

The protein localises to the cytoplasm. It catalyses the reaction 3-phosphoshikimate + phosphoenolpyruvate = 5-O-(1-carboxyvinyl)-3-phosphoshikimate + phosphate. The protein operates within metabolic intermediate biosynthesis; chorismate biosynthesis; chorismate from D-erythrose 4-phosphate and phosphoenolpyruvate: step 6/7. In terms of biological role, catalyzes the transfer of the enolpyruvyl moiety of phosphoenolpyruvate (PEP) to the 5-hydroxyl of shikimate-3-phosphate (S3P) to produce enolpyruvyl shikimate-3-phosphate and inorganic phosphate. The protein is 3-phosphoshikimate 1-carboxyvinyltransferase of Prochlorococcus marinus (strain MIT 9515).